The following is a 291-amino-acid chain: Exosome complex component RRP42 (291 aa).

Ala2 is modified (N-acetylalanine). Lys116 bears the N6-acetyllysine mark. A Phosphoserine modification is found at Ser177.

This sequence belongs to the RNase PH family. As to quaternary structure, component of the RNA exosome core complex (Exo-9), composed of EXOSC1, EXOSC2, EXOSC3, EXOSC4, EXOSC5, EXOSC6, EXOSC7, EXOSC8 and EXOSC9; within the complex interacts with EXOSC2 and EXOSC4. The catalytically inactive RNA exosome core complex (Exo-9) associates with the catalytic subunit EXOSC10/RRP6. Exo-9 may associate with DIS3 to form the nucleolar exosome complex, or DIS3L to form the cytoplasmic exosome complex. Exo-9 is formed by a hexameric base ring consisting of the heterodimers EXOSC4-EXOSC9, EXOSC5-EXOSC8 and EXOSC6-EXOSC7, and a cap ring consisting of EXOSC1, EXOSC2 and EXOSC3. The RNA exosome complex associates with cofactors C1D/RRP47, MPHOSPH6/MPP6 and MTREX/MTR4. Interacts with ZC3HAV1. Interacts with DIS3; the interaction is direct.

The protein localises to the nucleus. It localises to the nucleolus. Its subcellular location is the cytoplasm. Non-catalytic component of the RNA exosome complex which has 3'-&gt;5' exoribonuclease activity and participates in a multitude of cellular RNA processing and degradation events. In the nucleus, the RNA exosome complex is involved in proper maturation of stable RNA species such as rRNA, snRNA and snoRNA, in the elimination of RNA processing by-products and non-coding 'pervasive' transcripts, such as antisense RNA species and promoter-upstream transcripts (PROMPTs), and of mRNAs with processing defects, thereby limiting or excluding their export to the cytoplasm. The RNA exosome may be involved in Ig class switch recombination (CSR) and/or Ig variable region somatic hypermutation (SHM) by targeting AICDA deamination activity to transcribed dsDNA substrates. In the cytoplasm, the RNA exosome complex is involved in general mRNA turnover and specifically degrades inherently unstable mRNAs containing AU-rich elements (AREs) within their 3' untranslated regions, and in RNA surveillance pathways, preventing translation of aberrant mRNAs. It seems to be involved in degradation of histone mRNA. The catalytic inactive RNA exosome core complex of 9 subunits (Exo-9) is proposed to play a pivotal role in the binding and presentation of RNA for ribonucleolysis, and to serve as a scaffold for the association with catalytic subunits and accessory proteins or complexes. This chain is Exosome complex component RRP42 (EXOSC7), found in Homo sapiens (Human).